The following is a 199-amino-acid chain: Imidazole glycerol phosphate synthase subunit HisH 2 (199 aa).

Residues 1–199 (MIAVIDVSGN…NNFLSLESKC (199 aa)) form the Glutamine amidotransferase type-1 domain. C76 functions as the Nucleophile in the catalytic mechanism. Active-site residues include H177 and E179.

As to quaternary structure, heterodimer of HisH and HisF.

The protein resides in the cytoplasm. It carries out the reaction 5-[(5-phospho-1-deoxy-D-ribulos-1-ylimino)methylamino]-1-(5-phospho-beta-D-ribosyl)imidazole-4-carboxamide + L-glutamine = D-erythro-1-(imidazol-4-yl)glycerol 3-phosphate + 5-amino-1-(5-phospho-beta-D-ribosyl)imidazole-4-carboxamide + L-glutamate + H(+). The catalysed reaction is L-glutamine + H2O = L-glutamate + NH4(+). Its pathway is amino-acid biosynthesis; L-histidine biosynthesis; L-histidine from 5-phospho-alpha-D-ribose 1-diphosphate: step 5/9. IGPS catalyzes the conversion of PRFAR and glutamine to IGP, AICAR and glutamate. The HisH subunit provides the glutamine amidotransferase activity that produces the ammonia necessary to HisF for the synthesis of IGP and AICAR. The sequence is that of Imidazole glycerol phosphate synthase subunit HisH 2 from Legionella pneumophila (strain Lens).